A 380-amino-acid chain; its full sequence is uncharacterized protein (380 aa).

It belongs to the metallo-dependent hydrolases superfamily.

This is an uncharacterized protein from Methanocaldococcus jannaschii (strain ATCC 43067 / DSM 2661 / JAL-1 / JCM 10045 / NBRC 100440) (Methanococcus jannaschii).